Consider the following 272-residue polypeptide: Hemin import ATP-binding protein HmuV (272 aa).

One can recognise an ABC transporter domain in the interval 2–255 (LNADHLHVAR…EPIARCYGFR (254 aa)). 34–41 (GRNGAGKS) is an ATP binding site.

Belongs to the ABC transporter superfamily. Heme (hemin) importer (TC 3.A.1.14.5) family. In terms of assembly, the complex is composed of two ATP-binding proteins (HmuV), two transmembrane proteins (HmuU) and a solute-binding protein (HmuT).

It localises to the cell inner membrane. Part of the ABC transporter complex HmuTUV involved in hemin import. Responsible for energy coupling to the transport system. This Burkholderia pseudomallei (strain 1710b) protein is Hemin import ATP-binding protein HmuV.